Here is a 338-residue protein sequence, read N- to C-terminus: NAD kinase (338 aa).

Aspartate 66 serves as the catalytic Proton acceptor. NAD(+)-binding positions include 66–67, arginine 71, 141–142, lysine 152, aspartate 171, 182–187, and alanine 206; these read DG, ND, and TAYAFS. The disordered stretch occupies residues 317–338; sequence GDAGVAGTEPDKPGERDGKAGA. Basic and acidic residues predominate over residues 325–338; sequence EPDKPGERDGKAGA.

It belongs to the NAD kinase family. A divalent metal cation serves as cofactor.

It is found in the cytoplasm. It carries out the reaction NAD(+) + ATP = ADP + NADP(+) + H(+). Its function is as follows. Involved in the regulation of the intracellular balance of NAD and NADP, and is a key enzyme in the biosynthesis of NADP. Catalyzes specifically the phosphorylation on 2'-hydroxyl of the adenosine moiety of NAD to yield NADP. In Bifidobacterium longum subsp. infantis (strain ATCC 15697 / DSM 20088 / JCM 1222 / NCTC 11817 / S12), this protein is NAD kinase.